Consider the following 749-residue polypeptide: Basic juvenile hormone-suppressible protein 2 (749 aa).

Positions 1-14 are cleaved as a signal peptide; it reads MRAVLLFVVSLAAL.

This sequence belongs to the hemocyanin family. In terms of tissue distribution, fat body, and hemolymph of larvae.

This is Basic juvenile hormone-suppressible protein 2 (BJSP-2) from Trichoplusia ni (Cabbage looper).